The following is a 146-amino-acid chain: Hemoglobin subunit beta (146 aa).

Valine 1 is modified (N-acetylvaline). The Globin domain maps to 2–146 (HLTAEEKSAV…VANALAHKYH (145 aa)). Threonine 12 carries the post-translational modification Phosphothreonine. The residue at position 44 (serine 44) is a Phosphoserine. An N6-acetyllysine modification is found at lysine 59. Histidine 63 provides a ligand contact to heme b. Lysine 82 carries the post-translational modification N6-acetyllysine. Histidine 92 serves as a coordination point for heme b. Cysteine 93 carries the post-translational modification S-nitrosocysteine. An N6-acetyllysine modification is found at lysine 144.

Belongs to the globin family. As to quaternary structure, heterotetramer of two alpha chains and two beta chains. In terms of tissue distribution, red blood cells.

Its function is as follows. Involved in oxygen transport from the lung to the various peripheral tissues. This chain is Hemoglobin subunit beta (HBB), found in Leptonychotes weddellii (Weddell seal).